Here is a 100-residue protein sequence, read N- to C-terminus: NADH-quinone oxidoreductase subunit K 2 (100 aa).

3 consecutive transmembrane segments (helical) span residues 2 to 22, 29 to 49, and 61 to 81; these read LAIE…TIGV, IVIF…FIAF, and FVFF…ALMI.

This sequence belongs to the complex I subunit 4L family. As to quaternary structure, NDH-1 is composed of 14 different subunits. Subunits NuoA, H, J, K, L, M, N constitute the membrane sector of the complex.

Its subcellular location is the cell inner membrane. The catalysed reaction is a quinone + NADH + 5 H(+)(in) = a quinol + NAD(+) + 4 H(+)(out). In terms of biological role, NDH-1 shuttles electrons from NADH, via FMN and iron-sulfur (Fe-S) centers, to quinones in the respiratory chain. The immediate electron acceptor for the enzyme in this species is believed to be ubiquinone. Couples the redox reaction to proton translocation (for every two electrons transferred, four hydrogen ions are translocated across the cytoplasmic membrane), and thus conserves the redox energy in a proton gradient. In Geobacter sp. (strain M21), this protein is NADH-quinone oxidoreductase subunit K 2.